A 658-amino-acid chain; its full sequence is tRNA uridine 5-carboxymethylaminomethyl modification enzyme MnmG (658 aa).

An FAD-binding site is contributed by 13-18 (GAGHAG). An NAD(+)-binding site is contributed by 285–299 (GPRYCPSVEDKINRF).

Belongs to the MnmG family. Homodimer. Heterotetramer of two MnmE and two MnmG subunits. FAD is required as a cofactor.

The protein localises to the cytoplasm. In terms of biological role, NAD-binding protein involved in the addition of a carboxymethylaminomethyl (cmnm) group at the wobble position (U34) of certain tRNAs, forming tRNA-cmnm(5)s(2)U34. The polypeptide is tRNA uridine 5-carboxymethylaminomethyl modification enzyme MnmG (Verminephrobacter eiseniae (strain EF01-2)).